A 457-amino-acid chain; its full sequence is Protein PIN-LIKES 2 (457 aa).

Topologically, residues 1–15 (MSGFSSGNVNSRVVD) are lumenal. A helical transmembrane segment spans residues 16-36 (ILSGVVPLLKLICLTVIGLLL). Residues 37-54 (AHPKTQLVPRATFRLLSK) lie on the Cytoplasmic side of the membrane. A helical transmembrane segment spans residues 55–75 (LVFALFLPCLIFTELGESITL). Over 76–85 (DNIVQWWFIP) the chain is Lumenal. A helical transmembrane segment spans residues 86–106 (VNVLLSAVVGSLIGYLVVLIC). Over 107-116 (RPPPEFNRFT) the chain is Cytoplasmic. The helical transmembrane segment at 117–137 (IVMTAFGNTGNLLLAIVSSVC) threads the bilayer. Topologically, residues 138–151 (HTKTNPFGPNCNSR) are lumenal. A helical transmembrane segment spans residues 152 to 172 (GVSYVSFAQWVAVILVYTVVY). Residues 173–291 (HMMEPPLEYY…PVKHILQPPT (119 aa)) lie on the Cytoplasmic side of the membrane. Residues 292–312 (IASLLAIIIGSVPQLKSVVFG) traverse the membrane as a helical segment. At 313–322 (YDAPLSFITD) the chain is on the lumenal side. A helical membrane pass occupies residues 323–343 (SLNIMGSAMVPSVMLVLGGML). Residues 344–356 (SEGPNESTLGLRT) lie on the Cytoplasmic side of the membrane. The helical transmembrane segment at 357–377 (TIGISVARLLVLPLVGIGIVM) threads the bilayer. The Lumenal segment spans residues 378-393 (SADKLGLISSADPMFK). Residues 394 to 414 (FVLLLQYSTPSAILLGAIASL) traverse the membrane as a helical segment. Over 415-424 (RGYAVREASA) the chain is Cytoplasmic. The chain crosses the membrane as a helical span at residues 425 to 445 (LLFWQHIFALLSLTFYIVIFF). Residues 446–457 (KLTVETTVQGMQ) are Lumenal-facing.

This sequence belongs to the auxin efflux carrier (TC 2.A.69.2) family. Expressed in seedlings, rosette and cauline leaves, flowers and siliques.

The protein resides in the endoplasmic reticulum membrane. Functionally, involved in cellular auxin homeostasis by regulating auxin metabolism. Regulates intracellular auxin accumulation at the endoplasmic reticulum and thus auxin availability for nuclear auxin signaling. This chain is Protein PIN-LIKES 2, found in Arabidopsis thaliana (Mouse-ear cress).